The following is an 87-amino-acid chain: Protein moa-2 (87 aa).

The segment at 23 to 87 is disordered; it reads GTAMRHEPSR…VWTASREESS (65 aa). 2 stretches are compositionally biased toward basic and acidic residues: residues 26-39 and 50-63; these read MRHE…ESAP and RNEH…EREP.

This is Protein moa-2 from Caenorhabditis elegans.